Here is a 455-residue protein sequence, read N- to C-terminus: MNSFNKDEFDCHILDEGFTAKDILDQKINEVSSDDKDAFYVADLGDVLKKHLRWLKALPVTPFYAVKCNDSRALVNTLAAITVDCASKTEIQLVQGLGVPPERVIYANPCKQVSQIKYAASNGVQMMTFDSEIELMKVARAHPKVTKLVLRIATDDSKAVCRLSVKFGATLRTSRLLLERAKELNIDVIGVSFHVGSGCTDPETFVQALSDARCVFDMGTEVGFSMYLLDIGGGFPGSEDTKLKFEEITSVINPALDKYFPPDSGVRVIAEPGRYYVASAFTLAVNIIAKKIVSKGSDDEDESSEQTFMYYVNDGVYGSFNCILYDHAHVKPLLPKRPKPDEKYYSSSIWGPTCDGLDRIVERCNLPEMHVGDWMLFENMGAYTVAAASTFNGFQRPSIYYVMSRPMWQLMKQIQNHGFPPEVEEQDVGTLPISCAQESGMDRHPAACASASINV.

K67 is modified (N6-(pyridoxal phosphate)lysine). Residues S197, G234, and 271–274 each bind pyridoxal 5'-phosphate; that span reads EPGR. S297 carries the post-translational modification Phosphoserine; by CK2. Position 325–326 (325–326) interacts with substrate; the sequence is YD. Residue C354 is the Proton donor; shared with dimeric partner of the active site. C354 carries the post-translational modification S-nitrosocysteine. Substrate is bound at residue D355. Y383 is a pyridoxal 5'-phosphate binding site.

This sequence belongs to the Orn/Lys/Arg decarboxylase class-II family. In terms of assembly, homodimer. Only the dimer is catalytically active, as the active sites are constructed of residues from both monomers. Pyridoxal 5'-phosphate is required as a cofactor.

It carries out the reaction L-ornithine + H(+) = putrescine + CO2. It participates in amine and polyamine biosynthesis; putrescine biosynthesis via L-ornithine pathway; putrescine from L-ornithine: step 1/1. With respect to regulation, inhibited by antizymes (AZs) OAZ1, OAZ2 and OAZ3 in response to polyamine levels. AZs inhibit the assembly of the functional homodimer by binding to ODC monomers. Additionally, OAZ1 targets ODC monomers for ubiquitin-independent proteolytic destruction by the 26S proteasome. Catalyzes the first and rate-limiting step of polyamine biosynthesis that converts ornithine into putrescine, which is the precursor for the polyamines, spermidine and spermine. Polyamines are essential for cell proliferation and are implicated in cellular processes, ranging from DNA replication to apoptosis. This is Ornithine decarboxylase (ODC1) from Cricetulus griseus (Chinese hamster).